The primary structure comprises 167 residues: Phosphopantetheine adenylyltransferase (167 aa).

Residue Ser8 coordinates substrate. Residues Ser8–Phe9 and His16 contribute to the ATP site. Positions 40, 74, and 88 each coordinate substrate. Residues Gly89–Arg91, Glu99, and Trp123–Ser129 contribute to the ATP site.

The protein belongs to the bacterial CoaD family. Homohexamer. It depends on Mg(2+) as a cofactor.

The protein resides in the cytoplasm. The enzyme catalyses (R)-4'-phosphopantetheine + ATP + H(+) = 3'-dephospho-CoA + diphosphate. The protein operates within cofactor biosynthesis; coenzyme A biosynthesis; CoA from (R)-pantothenate: step 4/5. Reversibly transfers an adenylyl group from ATP to 4'-phosphopantetheine, yielding dephospho-CoA (dPCoA) and pyrophosphate. The protein is Phosphopantetheine adenylyltransferase of Deinococcus radiodurans (strain ATCC 13939 / DSM 20539 / JCM 16871 / CCUG 27074 / LMG 4051 / NBRC 15346 / NCIMB 9279 / VKM B-1422 / R1).